The following is a 471-amino-acid chain: ATP synthase subunit beta (471 aa).

156–163 (GGAGVGKT) provides a ligand contact to ATP.

Belongs to the ATPase alpha/beta chains family. F-type ATPases have 2 components, CF(1) - the catalytic core - and CF(0) - the membrane proton channel. CF(1) has five subunits: alpha(3), beta(3), gamma(1), delta(1), epsilon(1). CF(0) has three main subunits: a(1), b(2) and c(9-12). The alpha and beta chains form an alternating ring which encloses part of the gamma chain. CF(1) is attached to CF(0) by a central stalk formed by the gamma and epsilon chains, while a peripheral stalk is formed by the delta and b chains.

Its subcellular location is the cell membrane. The catalysed reaction is ATP + H2O + 4 H(+)(in) = ADP + phosphate + 5 H(+)(out). Its function is as follows. Produces ATP from ADP in the presence of a proton gradient across the membrane. The catalytic sites are hosted primarily by the beta subunits. This chain is ATP synthase subunit beta, found in Staphylococcus carnosus (strain TM300).